The following is a 308-amino-acid chain: Putative protein TIC 214 N-terminal part (308 aa).

The next 6 helical transmembrane spans lie at 18–38, 64–84, 87–107, 124–144, 172–192, and 215–235; these read IINSVVVVGFYYGFLTTFSIG, FITGQLMMFISIYYAPLHLAL, PHTITVLVLPHLLFHFFWNNH, LSIQCVFLNNLIFQLFNHFIL, VGWLIGHILFMKWVGLVLSWI, and IFSILLFITSVYYLGRMPSPI. The span at 239-249 shows a compositional bias: basic and acidic residues; it reads KLKETSEMEER. Residues 239–308 form a disordered region; that stretch reads KLKETSEMEE…RDPSEWKGNI (70 aa). A compositionally biased stretch (acidic residues) spans 250-262; the sequence is GESEEETDVEIET. The span at 264–273 shows a compositional bias: basic and acidic residues; that stretch reads SETKETKQEQ. The span at 275–293 shows a compositional bias: acidic residues; the sequence is GSTEEDPSLCSEEQEDPDK. Residues 294-308 are compositionally biased toward basic and acidic residues; it reads LDETGRDPSEWKGNI.

This sequence belongs to the TIC214 family. Part of the Tic complex.

It is found in the plastid. Its subcellular location is the chloroplast inner membrane. Involved in protein precursor import into chloroplasts. May be part of an intermediate translocation complex acting as a protein-conducting channel at the inner envelope. The chain is Putative protein TIC 214 N-terminal part from Piper cenocladum (Ant piper).